The sequence spans 248 residues: Pyridoxine 5'-phosphate synthase (248 aa).

Position 12 (Asn-12) interacts with 3-amino-2-oxopropyl phosphate. Residue 14–15 (DH) coordinates 1-deoxy-D-xylulose 5-phosphate. Arg-23 provides a ligand contact to 3-amino-2-oxopropyl phosphate. His-48 functions as the Proton acceptor in the catalytic mechanism. Positions 50 and 55 each coordinate 1-deoxy-D-xylulose 5-phosphate. The active-site Proton acceptor is the Glu-75. Thr-105 serves as a coordination point for 1-deoxy-D-xylulose 5-phosphate. The Proton donor role is filled by His-196. Residues Gly-197 and 218–219 (GH) contribute to the 3-amino-2-oxopropyl phosphate site.

The protein belongs to the PNP synthase family. In terms of assembly, homooctamer; tetramer of dimers.

It is found in the cytoplasm. The catalysed reaction is 3-amino-2-oxopropyl phosphate + 1-deoxy-D-xylulose 5-phosphate = pyridoxine 5'-phosphate + phosphate + 2 H2O + H(+). It participates in cofactor biosynthesis; pyridoxine 5'-phosphate biosynthesis; pyridoxine 5'-phosphate from D-erythrose 4-phosphate: step 5/5. Its function is as follows. Catalyzes the complicated ring closure reaction between the two acyclic compounds 1-deoxy-D-xylulose-5-phosphate (DXP) and 3-amino-2-oxopropyl phosphate (1-amino-acetone-3-phosphate or AAP) to form pyridoxine 5'-phosphate (PNP) and inorganic phosphate. This is Pyridoxine 5'-phosphate synthase from Pseudomonas aeruginosa (strain LESB58).